A 411-amino-acid chain; its full sequence is MREHFNDGVEFARFLAHRFVTDKAPNSAAALTYTTLFAVVPMMTVMFSMLSLIPAFHGMGESIQTFIFRNFVPSAGEAVETYLKSFTTQARHLTWVGVVFLAVTAFTMLVTIEKAFNEIWRVRQPRRGVGRFLLYWAILSLGPLLLGAGFAVTTYITSLSLLHGPDALPGAETLLGLMPLAFSVAAFTLLYSAVPNARVPVRHALMGGVFTAVLFEAAKTLFGLYVSLFPGYQLIYGAFATVPIFLLWIYLSWMIVLFGAVLVCNLSSSRLWRRRSLPKLIVLLGVLRVFHQRQQLGQSLRLTHLHRAGWLLPEDEWEELLDFLEKEQFVCRAGGGEWVLCRDLGAYSLHRLLNRCPWPMPSRERMPANLDEAWYPPFQQAMERLQVEQEALFGKSLAHWLADGTSGAKVT.

A run of 6 helical transmembrane segments spans residues 36-56 (LFAVVPMMTVMFSMLSLIPAF), 92-112 (HLTWVGVVFLAVTAFTMLVTI), 132-152 (FLLYWAILSLGPLLLGAGFAV), 174-194 (LLGLMPLAFSVAAFTLLYSAV), 207-229 (GGVFTAVLFEAAKTLFGLYVSLF), and 244-264 (IFLLWIYLSWMIVLFGAVLVC).

This sequence belongs to the UPF0761 family.

It localises to the cell inner membrane. This Pseudomonas aeruginosa (strain UCBPP-PA14) protein is UPF0761 membrane protein PA14_51960.